The sequence spans 160 residues: Cytochrome b6-f complex subunit 4 (160 aa).

3 consecutive transmembrane segments (helical) span residues 36–56 (LLYM…SLAV), 95–115 (LLGV…PFIE), and 131–151 (TLFL…ALPI).

It belongs to the cytochrome b family. PetD subfamily. The 4 large subunits of the cytochrome b6-f complex are cytochrome b6, subunit IV (17 kDa polypeptide, petD), cytochrome f and the Rieske protein, while the 4 small subunits are petG, petL, petM and petN. The complex functions as a dimer.

It localises to the plastid. The protein localises to the chloroplast thylakoid membrane. Component of the cytochrome b6-f complex, which mediates electron transfer between photosystem II (PSII) and photosystem I (PSI), cyclic electron flow around PSI, and state transitions. The protein is Cytochrome b6-f complex subunit 4 of Oltmannsiellopsis viridis (Marine flagellate).